The chain runs to 479 residues: Glycogen synthase (479 aa).

Residue Lys15 participates in ADP-alpha-D-glucose binding.

It belongs to the glycosyltransferase 1 family. Bacterial/plant glycogen synthase subfamily.

The catalysed reaction is [(1-&gt;4)-alpha-D-glucosyl](n) + ADP-alpha-D-glucose = [(1-&gt;4)-alpha-D-glucosyl](n+1) + ADP + H(+). It participates in glycan biosynthesis; glycogen biosynthesis. Its function is as follows. Synthesizes alpha-1,4-glucan chains using ADP-glucose. This is Glycogen synthase from Acidiphilium cryptum (strain JF-5).